Reading from the N-terminus, the 226-residue chain is Clarin-3 (226 aa).

A helical membrane pass occupies residues 8 to 28 (LMFLSSFFTSLGSFIVICSIL). Asn83 is a glycosylation site (N-linked (GlcNAc...) asparagine). Transmembrane regions (helical) follow at residues 92-112 (VTIL…GFTF), 129-149 (VYTW…LFVA), and 181-201 (FWLI…IIFY).

The protein belongs to the clarin family.

The protein localises to the membrane. In Homo sapiens (Human), this protein is Clarin-3 (CLRN3).